Here is a 250-residue protein sequence, read N- to C-terminus: uncharacterized protein (250 aa).

The disordered stretch occupies residues 182–205 (HTPIVSIQTPPPPAPTPNRPDVPA). Residues 190-201 (TPPPPAPTPNRP) are compositionally biased toward pro residues. The chain crosses the membrane as a helical span at residues 230–250 (TRISVIPLLSVLLLVIIIILL).

It belongs to the ascovirus HvAV ORF18 family.

The protein resides in the membrane. This is an uncharacterized protein from Spodoptera frugiperda ascovirus 1a (SfAV-1a).